Here is a 430-residue protein sequence, read N- to C-terminus: Ribosomal protein uS12 methylthiotransferase RimO (430 aa).

The region spanning 1–116 is the MTTase N-terminal domain; it reads MRVGIKVLGC…IANALEKGTD (116 aa). Cysteine 10, cysteine 46, cysteine 79, cysteine 148, cysteine 152, and cysteine 155 together coordinate [4Fe-4S] cluster. Positions 134 to 365 constitute a Radical SAM core domain; sequence LEERPYAYVK…LLQAEISNSR (232 aa). The 64-residue stretch at 367 to 430 folds into the TRAM domain; it reads DRFIGRKLKF…DEYDMWGSVT (64 aa).

Belongs to the methylthiotransferase family. RimO subfamily. [4Fe-4S] cluster is required as a cofactor.

It localises to the cytoplasm. It carries out the reaction L-aspartate(89)-[ribosomal protein uS12]-hydrogen + (sulfur carrier)-SH + AH2 + 2 S-adenosyl-L-methionine = 3-methylsulfanyl-L-aspartate(89)-[ribosomal protein uS12]-hydrogen + (sulfur carrier)-H + 5'-deoxyadenosine + L-methionine + A + S-adenosyl-L-homocysteine + 2 H(+). Its function is as follows. Catalyzes the methylthiolation of an aspartic acid residue of ribosomal protein uS12. The protein is Ribosomal protein uS12 methylthiotransferase RimO of Thermotoga sp. (strain RQ2).